The following is a 565-amino-acid chain: Arginine--tRNA ligase (565 aa).

Positions 121 to 131 (PNIAKPMGMGH) match the 'HIGH' region motif.

This sequence belongs to the class-I aminoacyl-tRNA synthetase family. Monomer.

It is found in the cytoplasm. The enzyme catalyses tRNA(Arg) + L-arginine + ATP = L-arginyl-tRNA(Arg) + AMP + diphosphate. In Lactobacillus delbrueckii subsp. bulgaricus (strain ATCC BAA-365 / Lb-18), this protein is Arginine--tRNA ligase.